Consider the following 34-residue polypeptide: Photosystem II reaction center protein M (34 aa).

A helical transmembrane segment spans residues 5-25 (ILGLIATTLFILIPTSFLLIL).

This sequence belongs to the PsbM family. PSII is composed of 1 copy each of membrane proteins PsbA, PsbB, PsbC, PsbD, PsbE, PsbF, PsbH, PsbI, PsbJ, PsbK, PsbL, PsbM, PsbT, PsbX, PsbY, PsbZ, Psb30/Ycf12, at least 3 peripheral proteins of the oxygen-evolving complex and a large number of cofactors. It forms dimeric complexes.

The protein localises to the plastid. Its subcellular location is the chloroplast thylakoid membrane. Its function is as follows. One of the components of the core complex of photosystem II (PSII). PSII is a light-driven water:plastoquinone oxidoreductase that uses light energy to abstract electrons from H(2)O, generating O(2) and a proton gradient subsequently used for ATP formation. It consists of a core antenna complex that captures photons, and an electron transfer chain that converts photonic excitation into a charge separation. This subunit is found at the monomer-monomer interface. This Pleurastrum terricola (Filamentous green alga) protein is Photosystem II reaction center protein M.